Reading from the N-terminus, the 455-residue chain is Bifunctional protein GlmU (455 aa).

The pyrophosphorylase stretch occupies residues 1–228 (MYKCALVLAA…YEETIGVNSR (228 aa)). UDP-N-acetyl-alpha-D-glucosamine contacts are provided by residues 8–11 (LAAG), Lys22, Gln73, and 78–79 (GT). Residue Asp103 coordinates Mg(2+). UDP-N-acetyl-alpha-D-glucosamine-binding residues include Gly140, Glu154, Asn169, and Asn226. Asn226 lines the Mg(2+) pocket. A linker region spans residues 229–249 (VQLAEAEEILKNRINLMHMEN). The segment at 250–455 (GVTLIDPRTT…GWVDKKGLKK (206 aa)) is N-acetyltransferase. UDP-N-acetyl-alpha-D-glucosamine is bound by residues Arg331 and Lys349. His361 serves as the catalytic Proton acceptor. UDP-N-acetyl-alpha-D-glucosamine-binding residues include Tyr364 and Asn375. Acetyl-CoA is bound by residues 384–385 (NY), Ala421, and Arg438.

It in the N-terminal section; belongs to the N-acetylglucosamine-1-phosphate uridyltransferase family. The protein in the C-terminal section; belongs to the transferase hexapeptide repeat family. Homotrimer. Mg(2+) serves as cofactor.

It localises to the cytoplasm. It carries out the reaction alpha-D-glucosamine 1-phosphate + acetyl-CoA = N-acetyl-alpha-D-glucosamine 1-phosphate + CoA + H(+). The enzyme catalyses N-acetyl-alpha-D-glucosamine 1-phosphate + UTP + H(+) = UDP-N-acetyl-alpha-D-glucosamine + diphosphate. The protein operates within nucleotide-sugar biosynthesis; UDP-N-acetyl-alpha-D-glucosamine biosynthesis; N-acetyl-alpha-D-glucosamine 1-phosphate from alpha-D-glucosamine 6-phosphate (route II): step 2/2. Its pathway is nucleotide-sugar biosynthesis; UDP-N-acetyl-alpha-D-glucosamine biosynthesis; UDP-N-acetyl-alpha-D-glucosamine from N-acetyl-alpha-D-glucosamine 1-phosphate: step 1/1. It functions in the pathway bacterial outer membrane biogenesis; LPS lipid A biosynthesis. Catalyzes the last two sequential reactions in the de novo biosynthetic pathway for UDP-N-acetylglucosamine (UDP-GlcNAc). The C-terminal domain catalyzes the transfer of acetyl group from acetyl coenzyme A to glucosamine-1-phosphate (GlcN-1-P) to produce N-acetylglucosamine-1-phosphate (GlcNAc-1-P), which is converted into UDP-GlcNAc by the transfer of uridine 5-monophosphate (from uridine 5-triphosphate), a reaction catalyzed by the N-terminal domain. This chain is Bifunctional protein GlmU, found in Clostridium beijerinckii (strain ATCC 51743 / NCIMB 8052) (Clostridium acetobutylicum).